Reading from the N-terminus, the 956-residue chain is MAM domain-containing glycosylphosphatidylinositol anchor protein 1 (956 aa).

Residues methionine 1–glycine 18 form the signal peptide. Ig-like domains are found at residues proline 24–arginine 123 and proline 132–threonine 230. Residue asparagine 42 is glycosylated (N-linked (GlcNAc...) asparagine). 2 disulfides stabilise this stretch: cysteine 60–cysteine 108 and cysteine 157–cysteine 214. 4 N-linked (GlcNAc...) asparagine glycosylation sites follow: asparagine 235, asparagine 247, asparagine 257, and asparagine 307. 4 Ig-like domains span residues proline 240–asparagine 323, proline 338–asparagine 432, proline 440–glutamine 532, and proline 539–serine 650. Cystine bridges form between cysteine 262-cysteine 308 and cysteine 357-cysteine 415. An N-linked (GlcNAc...) asparagine glycan is attached at asparagine 432. Disulfide bonds link cysteine 463–cysteine 514 and cysteine 560–cysteine 616. The Fibronectin type-III domain occupies cysteine 627–isoleucine 744. Residues asparagine 752–arginine 919 form the MAM domain. Over residues leucine 780 to asparagine 789 the composition is skewed to polar residues. Residues leucine 780–threonine 799 form a disordered region. A lipid anchor (GPI-anchor amidated serine) is attached at serine 933. Residues glycine 934–arginine 956 constitute a propeptide, removed in mature form.

In terms of assembly, interacts heterophilically through its MAM domain with proteins in axon-rich regions and through its Ig-like domains with proteins in differentiating muscle. Interacts (through the Ig-like domains) with NLGN2. As to expression, expressed by neurons in layers 2 and 3 of the cortex during their migration and settling in the cortical plate. Also found in layers 4 and 6a. From 9.5 dpc-13.5 dpc, detected in the marginal zone of the developing cortex. At 16.5 dpc, modest expression is found in the intermediate zone. At postnatal day 1, evident in the superficial cortical plate. By postnatal day 7, expression is limited to layers 2 and 3 throughout most of the cortex.

It localises to the cell membrane. In terms of biological role, required for radial migration of cortical neurons in the superficial layer of the neocortex. Plays a role in the formation or maintenance of inhibitory synapses. May function by inhibiting the activity of NLGN2. This is MAM domain-containing glycosylphosphatidylinositol anchor protein 1 from Mus musculus (Mouse).